The sequence spans 624 residues: Fibronectin type III domain-containing protein 2 (624 aa).

The first 19 residues, 1–19 (MREQFSVLVISLLFSSSYG), serve as a signal peptide directing secretion. Fibronectin type-III domains follow at residues 131 to 236 (PPQN…TPDI), 240 to 330 (EPTN…TDVF), 334 to 430 (MPRF…TVPT), 431 to 524 (VPRE…PKRD), and 527 to 624 (VPPN…WPGR).

Prismatic layer of shell (at protein level).

Its subcellular location is the secreted. The protein is Fibronectin type III domain-containing protein 2 of Margaritifera margaritifera (Freshwater pearl mussel).